The sequence spans 136 residues: Large ribosomal subunit protein uL16 (136 aa).

The protein belongs to the universal ribosomal protein uL16 family. In terms of assembly, part of the 50S ribosomal subunit.

Functionally, binds 23S rRNA and is also seen to make contacts with the A and possibly P site tRNAs. The sequence is that of Large ribosomal subunit protein uL16 from Ehrlichia canis (strain Jake).